Consider the following 470-residue polypeptide: Uronate isomerase (470 aa).

Belongs to the metallo-dependent hydrolases superfamily. Uronate isomerase family.

The catalysed reaction is D-glucuronate = D-fructuronate. The enzyme catalyses aldehydo-D-galacturonate = keto-D-tagaturonate. Its pathway is carbohydrate metabolism; pentose and glucuronate interconversion. This is Uronate isomerase from Cutibacterium acnes (strain DSM 16379 / KPA171202) (Propionibacterium acnes).